The following is a 260-amino-acid chain: Putative ABC transporter ATP-binding protein (260 aa).

The region spanning 4-243 (ISMKNVTLKK…QVLENFYESP (240 aa)) is the ABC transporter domain. 36–43 (GLNGSGKT) contributes to the ATP binding site.

Belongs to the ABC transporter superfamily.

This Streptococcus mutans serotype c (strain ATCC 700610 / UA159) protein is Putative ABC transporter ATP-binding protein (abcX).